Reading from the N-terminus, the 418-residue chain is Actin-related protein 3 (418 aa).

The protein belongs to the actin family. ARP3 subfamily. In terms of assembly, component of the Arp2/3 complex composed of actr2/arp2, actr3/arp3, arpc1b, arpc2, arpc3, arpc4 and arpc5.

It is found in the cytoplasm. It localises to the cytoskeleton. The protein resides in the cell projection. Its subcellular location is the nucleus. ATP-binding component of the Arp2/3 complex, a multiprotein complex that mediates actin polymerization upon stimulation by nucleation-promoting factor (NPF). The Arp2/3 complex mediates the formation of branched actin networks in the cytoplasm, providing the force for cell motility. Seems to contact the pointed end of the daughter actin filament. In addition to its role in the cytoplasmic cytoskeleton, the Arp2/3 complex also promotes actin polymerization in the nucleus, thereby regulating gene transcription and repair of damaged DNA. The Arp2/3 complex promotes homologous recombination (HR) repair in response to DNA damage by promoting nuclear actin polymerization, leading to drive motility of double-strand breaks (DSBs). This chain is Actin-related protein 3 (actr3), found in Takifugu rubripes (Japanese pufferfish).